Consider the following 164-residue polypeptide: Small ribosomal subunit protein uS5 (164 aa).

The 64-residue stretch at 10–73 folds into the S5 DRBM domain; that stretch reads LEERVVAVNR…DDAKKNLIEV (64 aa).

Belongs to the universal ribosomal protein uS5 family. Part of the 30S ribosomal subunit. Contacts proteins S4 and S8.

Its function is as follows. With S4 and S12 plays an important role in translational accuracy. In terms of biological role, located at the back of the 30S subunit body where it stabilizes the conformation of the head with respect to the body. The chain is Small ribosomal subunit protein uS5 from Streptococcus pneumoniae serotype 2 (strain D39 / NCTC 7466).